The sequence spans 205 residues: Protein GrpE (205 aa).

The disordered stretch occupies residues 172–205 (KGSTGPGAPAEPAAAPNPYASNGADTGGSFDTKA). Residues 177 to 195 (PGAPAEPAAAPNPYASNGA) show a composition bias toward low complexity.

This sequence belongs to the GrpE family. As to quaternary structure, homodimer.

The protein resides in the cytoplasm. Its function is as follows. Participates actively in the response to hyperosmotic and heat shock by preventing the aggregation of stress-denatured proteins, in association with DnaK and GrpE. It is the nucleotide exchange factor for DnaK and may function as a thermosensor. Unfolded proteins bind initially to DnaJ; upon interaction with the DnaJ-bound protein, DnaK hydrolyzes its bound ATP, resulting in the formation of a stable complex. GrpE releases ADP from DnaK; ATP binding to DnaK triggers the release of the substrate protein, thus completing the reaction cycle. Several rounds of ATP-dependent interactions between DnaJ, DnaK and GrpE are required for fully efficient folding. The chain is Protein GrpE from Caulobacter sp. (strain K31).